A 110-amino-acid chain; its full sequence is Ribonuclease P protein component 1 (110 aa).

It belongs to the eukaryotic/archaeal RNase P protein component 1 family. As to quaternary structure, consists of a catalytic RNA component and at least 4-5 protein subunits.

The protein localises to the cytoplasm. The catalysed reaction is Endonucleolytic cleavage of RNA, removing 5'-extranucleotides from tRNA precursor.. Functionally, part of ribonuclease P, a protein complex that generates mature tRNA molecules by cleaving their 5'-ends. The protein is Ribonuclease P protein component 1 of Methanosarcina acetivorans (strain ATCC 35395 / DSM 2834 / JCM 12185 / C2A).